We begin with the raw amino-acid sequence, 366 residues long: Leucine dehydrogenase (366 aa).

The active site involves lysine 82. 182-188 (GVGNVAY) contacts NAD(+).

It belongs to the Glu/Leu/Phe/Val dehydrogenases family.

The enzyme catalyses L-leucine + NAD(+) + H2O = 4-methyl-2-oxopentanoate + NH4(+) + NADH + H(+). It functions in the pathway amino-acid degradation; L-leucine degradation; 4-methyl-2-oxopentanoate from L-leucine (dehydrogenase route): step 1/1. Functionally, catalyzes the reversible deamination of L-leucine to 4-methyl-2-oxopentanoate. This is Leucine dehydrogenase (ldh) from Bacillus cereus.